We begin with the raw amino-acid sequence, 323 residues long: D-alanine--D-alanine ligase (323 aa).

The ATP-grasp domain occupies 120 to 319 (LSVLKPYGIK…LEDLFTNAIE (200 aa)). ATP is bound at residue 148-203 (VKKVGLPCFVKPNKAGSSFGISKVKSEAELPIAIEVAYKEDNEIIIESFLDGTEVS). Mg(2+) contacts are provided by E274, E286, and N288.

The protein belongs to the D-alanine--D-alanine ligase family. Mg(2+) serves as cofactor. Requires Mn(2+) as cofactor.

The protein resides in the cytoplasm. It catalyses the reaction 2 D-alanine + ATP = D-alanyl-D-alanine + ADP + phosphate + H(+). Its pathway is cell wall biogenesis; peptidoglycan biosynthesis. Cell wall formation. This Flavobacterium johnsoniae (strain ATCC 17061 / DSM 2064 / JCM 8514 / BCRC 14874 / CCUG 350202 / NBRC 14942 / NCIMB 11054 / UW101) (Cytophaga johnsonae) protein is D-alanine--D-alanine ligase.